The sequence spans 419 residues: WD repeat-containing protein JIP5 (419 aa).

WD repeat units follow at residues 4-45 (ALSS…HNQS), 66-105 (PSHK…VKAR), 108-147 (RAHE…EGDA), 180-220 (DQED…KGVE), 224-263 (DQED…LDHA), 268-308 (GHPS…GIVG), and 351-390 (DAAE…QPPP). Residues 172-192 (DPPRSKKKDQEDDLKRKRDEE) form a disordered region. The tract at residues 372–408 (SADGSDESAGESDVMQPPPATKRRTAKSKAGKKSVHD) is disordered. Basic residues predominate over residues 392–404 (TKRRTAKSKAGKK).

This sequence belongs to the WD repeat WDR55 family.

It is found in the nucleus. The protein localises to the nucleolus. The protein is WD repeat-containing protein JIP5 (JIP5) of Malassezia globosa (strain ATCC MYA-4612 / CBS 7966) (Dandruff-associated fungus).